We begin with the raw amino-acid sequence, 346 residues long: MIKIAIIGASGYTGVELSRLLCNHPQVEITAVTSRQYAGVALSEVFPNLRGRTSLICENLTIEELCLRADLFFAAVPHKTAMNIVPQLLAAGKKVIDLSADFRLNSAAVYEEWYQEHSAKEFLSQAVYGLPELYREQIAKTQLLANPGCYPTSIILGMAPLLRAGIIKPQSIIADSKSGTTGAGRGAKVGSLFCEVNDGFKAYGVGRKHRHTPEIEQELGKLANTDFNITFTPHLLPISRGILSTIYADLNCEIEADEVQALYEEMYKDEPFVRVLPLGSAPATQYVRGSNYCDIGFAIDQTTGRIIVMSAIDNVVKGAAGQAVQNMNIMCGFAEQEGLEIVPLFP.

Cysteine 149 is an active-site residue.

This sequence belongs to the NAGSA dehydrogenase family. Type 1 subfamily.

The protein resides in the cytoplasm. It carries out the reaction N-acetyl-L-glutamate 5-semialdehyde + phosphate + NADP(+) = N-acetyl-L-glutamyl 5-phosphate + NADPH + H(+). Its pathway is amino-acid biosynthesis; L-arginine biosynthesis; N(2)-acetyl-L-ornithine from L-glutamate: step 3/4. In terms of biological role, catalyzes the NADPH-dependent reduction of N-acetyl-5-glutamyl phosphate to yield N-acetyl-L-glutamate 5-semialdehyde. This chain is N-acetyl-gamma-glutamyl-phosphate reductase, found in Desulfotalea psychrophila (strain LSv54 / DSM 12343).